The chain runs to 367 residues: Protein RIC-3 (367 aa).

The signal sequence occupies residues 1-31 (MAYSTVQRVALASGLVLAVSLLLPKAFLSRG). A disordered region spans residues 30–67 (RGKRPEPPPGPEGKLDRFPPMMHHHSAPSDGQTPGARF). Over 32 to 95 (KRPEPPPGPE…AGGGGSGRGL (64 aa)) the chain is Lumenal. The helical transmembrane segment at 96 to 116 (MGQIIPIYGFGIFLYILYILF) threads the bilayer. The Cytoplasmic segment spans residues 117-367 (KLSKGKTAED…LRKRNPQGFE (251 aa)). Residues 138-169 (HRKITNFELVQLQEKLKETEEAMEKLINRVGP) are a coiled coil. The residue at position 201 (Lys-201) is an N6-acetyllysine; alternate. A Glycyl lysine isopeptide (Lys-Gly) (interchain with G-Cter in ubiquitin); alternate cross-link involves residue Lys-201. 2 disordered regions span residues 262 to 301 (QMGE…PESC) and 322 to 367 (ADGY…QGFE). Positions 271 to 280 (SERLSWDHLP) are enriched in basic and acidic residues. A compositionally biased stretch (basic residues) spans 358 to 367 (LRKRNPQGFE).

It belongs to the ric-3 family. As to quaternary structure, monomer and homodimer. Interacts with CHRNA7, CHRNA3, CHRNA4, CHRNB2, CHRNB4 and HTR3A. As to expression, expressed in brain, with highest levels in hippocampus, cerebellum and superior colliculus.

The protein localises to the endoplasmic reticulum membrane. Molecular chaperone which promotes the proper subunit assembly and surface trafficking of alpha-7 (CHRNA7) nicotinic acetylcholine receptor. Promotes the proper subunit assembly and cell surface expression of alpha-8 (CHRNA8) nicotinic acetylcholine receptor. May also promote functional expression of homomeric serotoninergic 5-HT3 receptors, and of heteromeric acetylcholine receptors alpha-3/beta-2, alpha-3/beta-4, alpha-4/beta-2 and alpha-4/beta-4. This is Protein RIC-3 (Ric3) from Mus musculus (Mouse).